A 240-amino-acid polypeptide reads, in one-letter code: Uridylate kinase (240 aa).

Residue 12–15 (KLSG) coordinates ATP. Residues 20–25 (GDQGKG) form an involved in allosteric activation by GTP region. Glycine 54 is a binding site for UMP. Positions 55 and 59 each coordinate ATP. UMP-binding positions include aspartate 74 and 135–142 (TGSPYFST). The ATP site is built by asparagine 163, tyrosine 169, and aspartate 172.

Belongs to the UMP kinase family. Homohexamer.

It localises to the cytoplasm. It carries out the reaction UMP + ATP = UDP + ADP. It participates in pyrimidine metabolism; CTP biosynthesis via de novo pathway; UDP from UMP (UMPK route): step 1/1. Its activity is regulated as follows. Allosterically activated by GTP. Inhibited by UTP. Functionally, catalyzes the reversible phosphorylation of UMP to UDP. This is Uridylate kinase from Ligilactobacillus salivarius (strain UCC118) (Lactobacillus salivarius).